Consider the following 219-residue polypeptide: Zinc finger C2HC domain-containing protein 1B (219 aa).

2 consecutive C2HC/C3H-type zinc fingers follow at residues 14–43 (ELFPCEVCGRRFAADVLERHGPICRKLFNK) and 117–146 (DYIQCPYCKRRFNETAASRHINFCKDQESR). Cys18, Cys21, His33, Cys37, Cys121, Cys124, His136, and Cys140 together coordinate Zn(2+). The interval 190–219 (EASAAPTRPAVDPASGAKLRQGFAKSSKKD) is disordered.

It belongs to the ZC2HC1 family. Zn(2+) serves as cofactor.

The protein is Zinc finger C2HC domain-containing protein 1B (ZC2HC1B) of Bos taurus (Bovine).